The following is a 364-amino-acid chain: Esculetin O-methyltransferase (364 aa).

A bergaptol-binding site is contributed by Asn-132. Residues Gly-209, Asp-232, Asp-252, Met-253, Met-265, and Lys-266 each contribute to the S-adenosyl-L-homocysteine site. His-270 lines the bergaptol pocket. Residue His-270 is the Proton acceptor of the active site.

This sequence belongs to the class I-like SAM-binding methyltransferase superfamily. Cation-independent O-methyltransferase family. COMT subfamily. In terms of assembly, homodimer. As to expression, expressed ubiquitously.

The enzyme catalyses bergaptol + S-adenosyl-L-methionine = bergapten + S-adenosyl-L-homocysteine. It carries out the reaction xanthotoxol + S-adenosyl-L-methionine = xanthotoxin + S-adenosyl-L-homocysteine + H(+). It catalyses the reaction esculetin + S-adenosyl-L-methionine = isoscopoletin + S-adenosyl-L-homocysteine + H(+). The catalysed reaction is esculetin + S-adenosyl-L-methionine = scopoletin + S-adenosyl-L-homocysteine + H(+). It participates in aromatic compound metabolism. The protein operates within secondary metabolite biosynthesis. Its activity is regulated as follows. Inhibited by zinc Zn(2+), copper Cu(2+) and silver Ag(+) ions. In terms of biological role, O-methyltransferase involved in the biosynthesis of methoxylated coumarins natural products such as isoscopoletin, scopoletin, xanthotoxin and bergapten, photosensitizers used for medical purpose such as treating psoriasis and vitiligo or facilitating resistance to microbial infection and other stresses. Catalyzes the methylation of esculetin, bergaptol and xanthotoxol, but seems inactive on scopoletin and isoscopoletin. This chain is Esculetin O-methyltransferase, found in Kitagawia praeruptora (Peucedanum praeruptorum).